A 108-amino-acid chain; its full sequence is Ribulose bisphosphate carboxylase small subunit (108 aa).

This sequence belongs to the RuBisCO small chain family. Heterohexadecamer of 8 large and 8 small subunits.

In terms of biological role, ruBisCO catalyzes two reactions: the carboxylation of D-ribulose 1,5-bisphosphate, the primary event in carbon dioxide fixation, as well as the oxidative fragmentation of the pentose substrate. Both reactions occur simultaneously and in competition at the same active site. Although the small subunit is not catalytic it is essential for maximal activity. The protein is Ribulose bisphosphate carboxylase small subunit of Nitrobacter vulgaris.